The following is a 146-amino-acid chain: ATP synthase epsilon chain 2 (146 aa).

The protein belongs to the ATPase epsilon chain family. F-type ATPases have 2 components, CF(1) - the catalytic core - and CF(0) - the membrane proton channel. CF(1) has five subunits: alpha(3), beta(3), gamma(1), delta(1), epsilon(1). CF(0) has three main subunits: a, b and c.

It localises to the cell inner membrane. Its function is as follows. Produces ATP from ADP in the presence of a proton gradient across the membrane. The protein is ATP synthase epsilon chain 2 of Cereibacter sphaeroides (strain ATCC 17023 / DSM 158 / JCM 6121 / CCUG 31486 / LMG 2827 / NBRC 12203 / NCIMB 8253 / ATH 2.4.1.) (Rhodobacter sphaeroides).